The sequence spans 1183 residues: LRR receptor-like serine/threonine-protein kinase FLS2 (1183 aa).

The N-terminal stretch at 1–41 (MERNKFASKMSQHYTKTICIAVVLVAVLFSLSSAAAAGSGA) is a signal peptide. At 42-809 (AVSVQLEALL…GKKRVFSRTG (768 aa)) the chain is on the extracellular side. Cysteine 87 and cysteine 94 form a disulfide bridge. 2 N-linked (GlcNAc...) asparagine glycosylation sites follow: asparagine 88 and asparagine 120. LRR repeat units follow at residues 97-120 (AGQV…FLGN), 121-145 (ISTL…LGRL), 147-169 (ELEQ…LCNC), 171-193 (AMWA…IGDL), 194-217 (SNLE…MAKL), 218-241 (KGIM…IGDL), 242-265 (SNLQ…LGRC), 267-289 (NLTL…LGEL), 290-313 (TNLE…LRRC), 315-337 (SLLN…LGEL), 338-361 (PSLQ…LTNL), 363-385 (NLTI…IGSL), and 386-409 (RNLR…ISNC). A disulfide bridge links cysteine 167 with cysteine 189. Asparagine 168 and asparagine 181 each carry an N-linked (GlcNAc...) asparagine glycan. Residue asparagine 267 is glycosylated (N-linked (GlcNAc...) asparagine). Asparagine 363, asparagine 395, asparagine 408, and asparagine 414 each carry an N-linked (GlcNAc...) asparagine glycan. LRR repeat units follow at residues 433–457 (LQSL…LFDC), 459–480 (QLQK…LVGQ), 481–505 (LGNL…IGNM), 507–529 (KLIS…ISNM), 530–553 (SSLQ…VFEL), 555–577 (QLTI…VANL), 578–600 (RSLS…ALGR), 601–625 (LDQL…VIAS), 627–651 (SNVQ…IGGL), 652–675 (VMVQ…LAGC), 676–699 (KNLY…LFPQ), 701–724 (DLLT…IAAL), 725–748 (KHIQ…LANL), and 749–773 (TALR…VFRN). N-linked (GlcNAc...) asparagine glycans are attached at residues asparagine 483, asparagine 504, and asparagine 528. N-linked (GlcNAc...) asparagine glycosylation occurs at asparagine 591. Residue asparagine 634 is glycosylated (N-linked (GlcNAc...) asparagine). N-linked (GlcNAc...) asparagine glycans are attached at residues asparagine 707, asparagine 747, asparagine 755, and asparagine 773. Residues 810–830 (LVILVVLIALSTLLLLMVATI) traverse the membrane as a helical segment. Topologically, residues 831 to 1183 (LLVSYRRYRR…LKMSKLVGED (353 aa)) are cytoplasmic. In terms of domain architecture, Protein kinase spans 876–1179 (FDQGNVIGSS…LSSLLKMSKL (304 aa)). ATP is bound by residues 882 to 890 (IGSSNLSTV) and lysine 908. The active-site Proton acceptor is aspartate 1013.

It belongs to the protein kinase superfamily. Ser/Thr protein kinase family. Interacts with SERK2.

The protein localises to the cell membrane. It catalyses the reaction L-seryl-[protein] + ATP = O-phospho-L-seryl-[protein] + ADP + H(+). It carries out the reaction L-threonyl-[protein] + ATP = O-phospho-L-threonyl-[protein] + ADP + H(+). Constitutes the pattern-recognition receptor (PPR) that determines the specific perception of flagellin (flg22), a potent elicitor of the defense response to pathogen-associated molecular patterns (PAMPs). Recognizes flg22 from Pseudomonas aeruginosa and Acidovorax avenae. flg22 is a peptide derived from the bacterial flagellin N-terminus sequence. Does not recognize flg22 from Xanthomonas oryzae pv. oryzae (Xoo) or Xanthomonas oryzae pv. oryzicola (Xoc). In Oryza sativa subsp. japonica (Rice), this protein is LRR receptor-like serine/threonine-protein kinase FLS2.